Reading from the N-terminus, the 329-residue chain is GMP reductase (329 aa).

C178 acts as the Thioimidate intermediate in catalysis. 207-230 (VIADGGIRTHGDVAKSIRMGATMV) contributes to the NADP(+) binding site.

Belongs to the IMPDH/GMPR family. GuaC type 2 subfamily.

The enzyme catalyses IMP + NH4(+) + NADP(+) = GMP + NADPH + 2 H(+). In terms of biological role, catalyzes the irreversible NADPH-dependent deamination of GMP to IMP. It functions in the conversion of nucleobase, nucleoside and nucleotide derivatives of G to A nucleotides, and in maintaining the intracellular balance of A and G nucleotides. The sequence is that of GMP reductase from Lactococcus lactis subsp. cremoris (strain MG1363).